The sequence spans 274 residues: 2,3,4,5-tetrahydropyridine-2,6-dicarboxylate N-succinyltransferase (274 aa).

Substrate is bound by residues Arg104 and Asp141.

It belongs to the transferase hexapeptide repeat family. In terms of assembly, homotrimer.

The protein resides in the cytoplasm. It carries out the reaction (S)-2,3,4,5-tetrahydrodipicolinate + succinyl-CoA + H2O = (S)-2-succinylamino-6-oxoheptanedioate + CoA. It functions in the pathway amino-acid biosynthesis; L-lysine biosynthesis via DAP pathway; LL-2,6-diaminopimelate from (S)-tetrahydrodipicolinate (succinylase route): step 1/3. The sequence is that of 2,3,4,5-tetrahydropyridine-2,6-dicarboxylate N-succinyltransferase from Shewanella amazonensis (strain ATCC BAA-1098 / SB2B).